The primary structure comprises 58 residues: Metallothionein-2B (58 aa).

The segment at 1-29 (MPDPCCNDKCECKEGECKTGCKCKSCRCP) is beta. Positions 5, 6, 10, 12, 17, 21, 23, 26, 28, 31, 34, 38, 40, 46, 50, 54, 56, and 57 each coordinate a divalent metal cation. The tract at residues 30–58 (PCDKCSSECKCTSKEECSKTCSKPCSCCP) is alpha.

It belongs to the metallothionein superfamily. Type 3 family.

Its function is as follows. Binds six divalent metal ions. Known to bind copper and cadmium. The sequence is that of Metallothionein-2B from Callinectes sapidus (Blue crab).